A 461-amino-acid chain; its full sequence is Probable tubulin polyglutamylase TTLL9 (461 aa).

Residues 1–10 are compositionally biased toward polar residues; sequence MSRQKSQTSK. Positions 1 to 20 are disordered; that stretch reads MSRQKSQTSKGHGASKGKER. The TTL domain occupies 22–402; that stretch reads QRTLIRFKTT…EARLTGKEKR (381 aa). ATP is bound by residues K149 and 155–156; that span reads QG. Q155 is a binding site for a protein. The segment covering 186-197 has biased composition (polar residues); sequence QATRANVNPSGS. Positions 186 to 208 are disordered; that stretch reads QATRANVNPSGSHDTRSSDDQKD. Positions 198-208 are enriched in basic and acidic residues; the sequence is HDTRSSDDQKD. ATP contacts are provided by residues 218 to 221 and 231 to 233; these read QRYV and KFD. R257 contacts L-glutamate. 276-277 contributes to the ATP binding site; that stretch reads TN. K294 provides a ligand contact to L-glutamate. The Mg(2+) site is built by D348, E361, and N363. Residue K379 coordinates L-glutamate.

The protein belongs to the tubulin--tyrosine ligase family. Mg(2+) serves as cofactor.

It is found in the cytoplasm. It localises to the cytoskeleton. Its subcellular location is the cilium basal body. The protein localises to the flagellum axoneme. The catalysed reaction is (L-glutamyl)(n)-gamma-L-glutamyl-L-glutamyl-[protein] + L-glutamate + ATP = (L-glutamyl)(n+1)-gamma-L-glutamyl-L-glutamyl-[protein] + ADP + phosphate + H(+). Functionally, probable tubulin polyglutamylase that generates side chains of glutamate on the gamma-carboxyl group of specific glutamate residues within the C-terminal tail of target proteins. Similar to TTLL1, may acquire enzymatic activity only in complex with other proteins as it is most likely lacking domains important for autonomous activity. Mediates tubulin polyglutamylation which induces establishment of microtubule heterogeneity in sperm flagella, thereby playing a role in normal motile flagella axoneme structure and sperm flagella beating pattern. The polypeptide is Probable tubulin polyglutamylase TTLL9 (Ttll9) (Rattus norvegicus (Rat)).